The sequence spans 300 residues: Phospholipase A1 (300 aa).

A disulfide bridge connects residues cysteine 4 and cysteine 87. Serine 137 serves as the catalytic Nucleophile. The active-site Charge relay system is aspartate 165. 2 disulfides stabilise this stretch: cysteine 176-cysteine 181 and cysteine 219-cysteine 227. The active-site Charge relay system is the histidine 229. 3 disulfide bridges follow: cysteine 244–cysteine 268, cysteine 245–cysteine 293, and cysteine 261–cysteine 266.

It belongs to the AB hydrolase superfamily. Lipase family. Expressed by the venom gland.

It is found in the secreted. The catalysed reaction is a 1,2-diacyl-sn-glycero-3-phosphocholine + H2O = a 2-acyl-sn-glycero-3-phosphocholine + a fatty acid + H(+). In terms of biological role, catalyzes the hydrolysis of phosphatidylcholine with phospholipase A1 activity. May act as an allergen and induce hemolytic activity. The polypeptide is Phospholipase A1 (Vespula maculifrons (Eastern yellow jacket)).